A 399-amino-acid polypeptide reads, in one-letter code: 1-deoxy-D-xylulose 5-phosphate reductoisomerase (399 aa).

Residues threonine 13, glycine 14, serine 15, isoleucine 16, and asparagine 127 each coordinate NADPH. Position 128 (lysine 128) interacts with 1-deoxy-D-xylulose 5-phosphate. Glutamate 129 is an NADPH binding site. A Mn(2+)-binding site is contributed by aspartate 153. 1-deoxy-D-xylulose 5-phosphate contacts are provided by serine 154, glutamate 155, serine 187, and histidine 210. Glutamate 155 provides a ligand contact to Mn(2+). Glycine 216 provides a ligand contact to NADPH. 1-deoxy-D-xylulose 5-phosphate contacts are provided by serine 223, asparagine 228, lysine 229, and glutamate 232. Position 232 (glutamate 232) interacts with Mn(2+).

The protein belongs to the DXR family. The cofactor is Mg(2+). Mn(2+) serves as cofactor.

The enzyme catalyses 2-C-methyl-D-erythritol 4-phosphate + NADP(+) = 1-deoxy-D-xylulose 5-phosphate + NADPH + H(+). It functions in the pathway isoprenoid biosynthesis; isopentenyl diphosphate biosynthesis via DXP pathway; isopentenyl diphosphate from 1-deoxy-D-xylulose 5-phosphate: step 1/6. In terms of biological role, catalyzes the NADPH-dependent rearrangement and reduction of 1-deoxy-D-xylulose-5-phosphate (DXP) to 2-C-methyl-D-erythritol 4-phosphate (MEP). This chain is 1-deoxy-D-xylulose 5-phosphate reductoisomerase, found in Bordetella pertussis (strain Tohama I / ATCC BAA-589 / NCTC 13251).